A 220-amino-acid chain; its full sequence is Protein-L-isoaspartate O-methyltransferase (220 aa).

Ser-65 is a catalytic residue.

This sequence belongs to the methyltransferase superfamily. L-isoaspartyl/D-aspartyl protein methyltransferase family.

The protein resides in the cytoplasm. The enzyme catalyses [protein]-L-isoaspartate + S-adenosyl-L-methionine = [protein]-L-isoaspartate alpha-methyl ester + S-adenosyl-L-homocysteine. Its function is as follows. Catalyzes the methyl esterification of L-isoaspartyl residues in peptides and proteins that result from spontaneous decomposition of normal L-aspartyl and L-asparaginyl residues. It plays a role in the repair and/or degradation of damaged proteins. This Pyrococcus horikoshii (strain ATCC 700860 / DSM 12428 / JCM 9974 / NBRC 100139 / OT-3) protein is Protein-L-isoaspartate O-methyltransferase (pcm).